Here is a 205-residue protein sequence, read N- to C-terminus: MGKPLYLVKFIIIGSQSVGKSCLLFRFIDNKFKSQSTHTIGVDFSSRVVDIQGKNVKLQIWDTAGQERFRSVVISYYRGSAGVALVYDVTNRESYNHITNWLSDVKSLASPDVTIILVGNKADLTEQREVTFLEASRIAQENGLLFMETSALTGEGVEEMFLKCTRTIMTKIDSGEVNLEHLGVQISSDSGNVTKKPGDSSNCSC.

14–22 (GSQSVGKSC) is a GTP binding site. Positions 36–44 (STHTIGVDF) match the Effector region motif. Residues 62–66 (DTAGQ), 120–123 (NKAD), and 150–152 (SAL) each bind GTP. S-geranylgeranyl cysteine attachment occurs at residues C203 and C205. C205 is modified (cysteine methyl ester).

Belongs to the small GTPase superfamily. Rab family.

The protein localises to the cell membrane. In terms of biological role, protein transport. Probably involved in vesicular traffic. The chain is Ras-related protein Rab-4 (rab4) from Dictyostelium discoideum (Social amoeba).